The chain runs to 179 residues: MSRIGKLPVSITKGVKVELKDDKVIVSGPKGTLEQKLRPEVTVSVDGNNVVVTRKDDTRPSKEMHGLYRVLINNMVTGVSTGFTKKLELVGVGYKAEIKKDMLVLSLGFSHQIYFKTPAEIKVEVPAPTNISISGSDKELVGQVAAKIRSFRPPEPYQGKGVKYENEVIRRKEGKAAGK.

This sequence belongs to the universal ribosomal protein uL6 family. Part of the 50S ribosomal subunit.

In terms of biological role, this protein binds to the 23S rRNA, and is important in its secondary structure. It is located near the subunit interface in the base of the L7/L12 stalk, and near the tRNA binding site of the peptidyltransferase center. The protein is Large ribosomal subunit protein uL6 of Chloroherpeton thalassium (strain ATCC 35110 / GB-78).